The chain runs to 342 residues: Protein RecA (342 aa).

Residue 65 to 72 participates in ATP binding; that stretch reads GPESSGKT.

This sequence belongs to the RecA family.

Its subcellular location is the cytoplasm. Functionally, can catalyze the hydrolysis of ATP in the presence of single-stranded DNA, the ATP-dependent uptake of single-stranded DNA by duplex DNA, and the ATP-dependent hybridization of homologous single-stranded DNAs. It interacts with LexA causing its activation and leading to its autocatalytic cleavage. This Caldanaerobacter subterraneus subsp. tengcongensis (strain DSM 15242 / JCM 11007 / NBRC 100824 / MB4) (Thermoanaerobacter tengcongensis) protein is Protein RecA.